The chain runs to 793 residues: Copalyl diphosphate synthase CPS1, chloroplastic (793 aa).

The transit peptide at M1–A59 directs the protein to the chloroplast. K238 contacts substrate. D370 and D372 together coordinate Mg(2+). The short motif at D370 to D373 is the DXDD motif element. Substrate is bound at residue K457.

It belongs to the terpene synthase family. Mg(2+) is required as a cofactor.

The protein resides in the plastid. It localises to the chloroplast. The enzyme catalyses (2E,6E,10E)-geranylgeranyl diphosphate = (+)-copalyl diphosphate. It participates in secondary metabolite biosynthesis; terpenoid biosynthesis. Functionally, involved in tanshinone biosynthesis in hairy roots. Catalyzes the conversion of geranylgeranyl diphosphate (GGPP) to copalyl diphosphate (CPP). The sequence is that of Copalyl diphosphate synthase CPS1, chloroplastic from Salvia miltiorrhiza (Chinese sage).